We begin with the raw amino-acid sequence, 366 residues long: Mitogen-activated protein kinase p38a (366 aa).

A Protein kinase domain is found at Tyr25 to Leu312. ATP is bound by residues Val31–Val39 and Lys54. Asp154 serves as the catalytic Proton acceptor. Thr184 is modified (phosphothreonine). Residues Thr184–Tyr186 carry the TXY motif. Residue Tyr186 is modified to Phosphotyrosine.

It belongs to the protein kinase superfamily. CMGC Ser/Thr protein kinase family. MAP kinase subfamily. Mg(2+) is required as a cofactor. Dually phosphorylated on Thr-184 and Tyr-186, which activates the enzyme.

It localises to the nucleus. The enzyme catalyses L-seryl-[protein] + ATP = O-phospho-L-seryl-[protein] + ADP + H(+). It carries out the reaction L-threonyl-[protein] + ATP = O-phospho-L-threonyl-[protein] + ADP + H(+). Activated by threonine and tyrosine phosphorylation by Mkk3 in response to environmental stress. Kinase involved in a signal transduction pathway. May down-regulate insect immunity gene expression after prolonged infection. This is Mitogen-activated protein kinase p38a from Drosophila melanogaster (Fruit fly).